Reading from the N-terminus, the 294-residue chain is Probable WRKY transcription factor 70 (294 aa).

A disordered region spans residues S72–G94. A compositionally biased stretch (basic and acidic residues) spans N79 to K91. The Nuclear localization signal motif lies at R90 to K97. The segment at residues I114–N182 is a DNA-binding region (WRKY). The disordered stretch occupies residues S201–N229.

The protein belongs to the WRKY group III family. In terms of assembly, interacts with WRKY30. Binds to BZR2/BES1 to cooperatively regulate the expression of target genes. Binds to unmodified (i.e. not sumoylated) NPR1. Phosphorylated and destabilized by ASK7/BIN2. As to expression, expressed in leaves and flowers.

It localises to the nucleus. Functionally, transcription factor involved in senescence, biotic and abiotic stress responses by modulating various phytohormones signaling pathways. Interacts specifically with the W box (5'-(T)TGAC[CT]-3'), a frequently occurring elicitor-responsive cis-acting element. Binds to the 5'-[CT]GACTTTT-3' motif in promoters of target genes to induce their expression. Binding to the W-box element of PR-1 promoter is mediated by not-sumoylated NPR1 in the absence of salicylic acid. Plays an important but not indispensable role in jasmonate and salicylic acid signaling. Positively regulates the salicylic acid (SA)-mediated signal pathway, but negatively the jasmonic acid (JA)-mediated signal pathway, thus determining the balance between these mutually antagonistic pathways. Together with WRKY46, WRKY53 and WRKY54, prevents defense response to the necrotrophic pathogens P.carotovorum and B.cinerea, but promotes defense responses (including SA-induced pathogenesis-related (PR) genes expression) against biotrophic/hemibiotrophic SA-monitored pathogens (e.g. P.syringae, E.carotovora subsp. carotovora SCC3193 and E.cichoracearum), probably by regulating negatively the JA/ET and positively the SA signaling pathways. Contributes to the suppression of jasmonic acid (MeJA)-induced expression of JA-responsive genes (e.g. PDF1.2). Promotes susceptibility to JA-monitored pathogens (e.g. A.brassicicola), probably by facilitating SA-controlled suppression of JA-mediated defense. Represses the biosynthesis of the phytoalexin camalexin and indol-3-ylmethyl glucosinolate (IGS). Represses both SA and JA/ethylene (ET) mediated defense marker genes expression. Negative regulator of SA biosynthesis. Negative regulator of EDS1-dependent defense against E.amylovora. Required for RPP4-mediated disease resistance and basal defense against H.parasitica, probably via late up-regulation (LURP) of resistance genes (e.g. CML10/CaBP22 and LURP1). Probably involved in defense responses toward insects (e.g. P.xylostella and B.brassicae). Together with WRKY54, negative regulator of developmental senescence, probably via the regulation of several senescence-associated markers genes. Together with WRKY46 and WRKY54, promotes brassinosteroid (BR)-regulated plant growth but prevent drought response by modulating gene expression. In collaboration with WRKY54, prevents stomatal closure and, consequently, osmotic stress tolerance. Regulates rhizobacterium B.cereus AR156-induced systemic resistance (ISR) to P.syringae pv. tomato DC3000. The sequence is that of Probable WRKY transcription factor 70 from Arabidopsis thaliana (Mouse-ear cress).